We begin with the raw amino-acid sequence, 209 residues long: 60S ribosomal subunit assembly/export protein loc-1 (209 aa).

2 disordered regions span residues 1–53 (MAPT…SKGR) and 135–209 (REAR…AAPE). Composition is skewed to basic and acidic residues over residues 20-33 (GSKD…DGVL) and 135-159 (REAR…TKDS). Positions 126–170 (IKARQMEEIREARRAEAEKKEAERKARLEETKDSLRKKRKRSKQS) form a coiled coil.

It belongs to the LOC1 family. In terms of assembly, component of the 66S pre-ribosomal particle.

The protein resides in the nucleus. Its subcellular location is the nucleolus. In terms of biological role, required for efficient assembly and nuclear export of the 60S ribosomal subunit. The protein is 60S ribosomal subunit assembly/export protein loc-1 (loc-1) of Neurospora crassa (strain ATCC 24698 / 74-OR23-1A / CBS 708.71 / DSM 1257 / FGSC 987).